Consider the following 171-residue polypeptide: Protein FAM209A (171 aa).

The first 19 residues, 1–19, serve as a signal peptide directing secretion; that stretch reads MWTLKSSLVLLLCLTCSYA. Topologically, residues 20–52 are extracellular; it reads FMFSSLRQKTSEPQGKVQYGEHFRIRQNLPEHT. Residues 53–73 form a helical membrane-spanning segment; sequence QGWLGSKWLWLLFVVVPFVIL. The Cytoplasmic segment spans residues 74 to 171; the sequence is QCQRDSEKNK…CEIWGEESSS (98 aa). Positions 81–107 are disordered; sequence KNKEQSPPGLRGGQLHSPLKKKRNASP. Residues 114-139 are a coiled coil; sequence NTLMELEVELMKFVSKVRNLKRAMAT.

Belongs to the FAM209 family. In terms of assembly, interacts with DPY19L2. Interacts with CYLC1; the interaction may be relevant for proper acrosome attachment to the nuclear envelope.

The protein localises to the nucleus inner membrane. Its function is as follows. May play a role in sperm acrosome biogenesis. This chain is Protein FAM209A, found in Homo sapiens (Human).